The following is a 223-amino-acid chain: Deoxyribose-phosphate aldolase (223 aa).

Asp91 serves as the catalytic Proton donor/acceptor. Lys153 acts as the Schiff-base intermediate with acetaldehyde in catalysis. Lys182 (proton donor/acceptor) is an active-site residue.

It belongs to the DeoC/FbaB aldolase family. DeoC type 1 subfamily.

The protein resides in the cytoplasm. It carries out the reaction 2-deoxy-D-ribose 5-phosphate = D-glyceraldehyde 3-phosphate + acetaldehyde. The protein operates within carbohydrate degradation; 2-deoxy-D-ribose 1-phosphate degradation; D-glyceraldehyde 3-phosphate and acetaldehyde from 2-deoxy-alpha-D-ribose 1-phosphate: step 2/2. Its function is as follows. Catalyzes a reversible aldol reaction between acetaldehyde and D-glyceraldehyde 3-phosphate to generate 2-deoxy-D-ribose 5-phosphate. In Streptococcus pyogenes serotype M1, this protein is Deoxyribose-phosphate aldolase.